A 410-amino-acid chain; its full sequence is Mating-type locus allele B1 protein (410 aa).

The tract at residues 1–110 is variable domain between B alleles; sequence MSSDPNFSLI…FNVVSPDVGC (110 aa). Positions 107–184 form a DNA-binding region, homeobox; TALE-type; sequence DVGCRNLSED…NARRRSGWSH (78 aa). Residues 111–410 form a highly conserved between B alleles region; it reads RNLSEDLPAY…PFLCLSVAFV (300 aa). 3 disordered regions span residues 202–239, 278–335, and 374–395; these read RAKL…PLTP, TPKP…TPEL, and ARGN…PDEV. Positions 205–233 are enriched in low complexity; that stretch reads LSSSNQSTPPSSTSDSLSNNLDDVLSDNL. A Nuclear localization signal motif is present at residues 276 to 308; sequence KKTPKPGMPRPVTTVAKRHPARKTKPAAKPKSR. A compositionally biased stretch (basic residues) spans 291–307; the sequence is AKRHPARKTKPAAKPKS. Positions 312 to 335 are enriched in polar residues; the sequence is PRASTTPSIDSTLDSSKLESTPEL. A not essential for B1 function region spans residues 333 to 410; that stretch reads PELSMCSTAD…PFLCLSVAFV (78 aa). Residues 375 to 388 are compositionally biased toward basic residues; sequence RGNRKVKALPKRAG.

The protein belongs to the TALE/M-ATYP homeobox family.

The protein resides in the nucleus. In terms of biological role, the B locus has at least 25 alleles, and any combination of two different B alleles yields a multimeric regulatory protein, that activates genes responsible for the pathogenicity and for the sexual development of the fungus within the corn plant. The polypeptide is Mating-type locus allele B1 protein (Mycosarcoma maydis (Corn smut fungus)).